Consider the following 269-residue polypeptide: Exodeoxyribonuclease WalJ (269 aa).

The a divalent metal cation site is built by histidine 61, histidine 63, aspartate 65, histidine 66, and aspartate 150.

This sequence belongs to the metallo-beta-lactamase superfamily. It depends on Fe(2+) as a cofactor. Zn(2+) is required as a cofactor. Mn(2+) serves as cofactor.

The protein resides in the cell membrane. Functionally, 5'-&gt;3' double-stranded DNA exonuclease. May be involved in the WalK/WalR signal transduction pathway. Required for accurate coordination of cell division with DNA replication. May play a role in cell wall metabolism. The polypeptide is Exodeoxyribonuclease WalJ (Streptococcus pneumoniae serotype 2 (strain D39 / NCTC 7466)).